A 388-amino-acid polypeptide reads, in one-letter code: MNLHEYQAKQLFAEFGLPIPEGYACDTPQEAFEAAGRISTAKKVVKCQVHAGGRGKAGGVELHDTKEGVKEFAQKWLGKNLVTYQTDANGQPVTKILVEEASNIANELYLGAVVDRATRKVVFMASTEGGVEIEKVAEETPELIHKAAIDPLVGPQAYQGRELAFKLGLQGDQIKQFVKIFMGLGEMFTQYDLALLEINPLVITGEGNLLCLDGKINIDSNALYRQPKLREMHDPSQEDKREAHAAQWELNYVALDGNVGCMVNGAGLAMGTMDIVNLHGGKPANFLDVGGGATKERVAEAFKIILSDDNVKAVLVNIFGGIVRCDMIAEGIIGAVKEVGVSVPVVVRLEGTNADLGRKVLAESGLDIIAAESLTDAAQKVVAAAEGK.

The ATP-grasp domain occupies 9 to 244; sequence KQLFAEFGLP…PSQEDKREAH (236 aa). Residues Lys-46, 53–55, Glu-99, Ser-102, and Glu-107 each bind ATP; that span reads GRG. 2 residues coordinate Mg(2+): Asn-199 and Asp-213. Substrate is bound by residues Asn-264 and 321 to 323; that span reads GIV.

It belongs to the succinate/malate CoA ligase beta subunit family. As to quaternary structure, heterotetramer of two alpha and two beta subunits. Requires Mg(2+) as cofactor.

It catalyses the reaction succinate + ATP + CoA = succinyl-CoA + ADP + phosphate. The enzyme catalyses GTP + succinate + CoA = succinyl-CoA + GDP + phosphate. It participates in carbohydrate metabolism; tricarboxylic acid cycle; succinate from succinyl-CoA (ligase route): step 1/1. Succinyl-CoA synthetase functions in the citric acid cycle (TCA), coupling the hydrolysis of succinyl-CoA to the synthesis of either ATP or GTP and thus represents the only step of substrate-level phosphorylation in the TCA. The beta subunit provides nucleotide specificity of the enzyme and binds the substrate succinate, while the binding sites for coenzyme A and phosphate are found in the alpha subunit. The protein is Succinate--CoA ligase [ADP-forming] subunit beta of Vibrio vulnificus (strain YJ016).